Reading from the N-terminus, the 665-residue chain is Pentatricopeptide repeat-containing protein At3g02490, mitochondrial (665 aa).

Residues 1–37 (MRYQWRSLLFRSYRSSPRPFLSHHSRFQVISNSTRSF) constitute a mitochondrion transit peptide. PPR repeat units lie at residues 280–314 (DEKTYNAMARVLGKEKFLDRFQHMIEEIRSAGYEM), 315–349 (EMETYVRVSARFCQTKMIKEAVELFEFAMAGSISN), 352–388 (TPHCCSLLLKKIVTAKKLDMDLFTRTLKAYTGNGNVV), 389–423 (PDVMLQHVLKSLRSVDRFGQSNEVLKAMNEGGYVP), 424–458 (SGDLQSVIASGLSRKGKKDEANELVNFMEASGNHL), 459–493 (DDKAMASLVEGHCDAKDLEEASECFKKMIGKEGVS), 495–530 (AGYAFEKLVLAYCNSFQARDVYKLFSELVKQNQLKP), and 536–570 (KIMVRNLLMKKVARDGGFEEALSLLPMMRNHGFPP).

This sequence belongs to the PPR family. P subfamily.

The protein localises to the mitochondrion. The chain is Pentatricopeptide repeat-containing protein At3g02490, mitochondrial from Arabidopsis thaliana (Mouse-ear cress).